A 327-amino-acid polypeptide reads, in one-letter code: Peroxidase N (327 aa).

Positions 1–28 (MKTQTKVMGGHVLLTVFTLCMLCSAVRA) are cleaved as a signal peptide. Pyrrolidone carboxylic acid is present on Gln-29. Cystine bridges form between Cys-39-Cys-116, Cys-72-Cys-77, Cys-122-Cys-323, and Cys-200-Cys-232. His-70 functions as the Proton acceptor in the catalytic mechanism. Residues Asp-71, Val-74, Gly-76, Asp-78, and Ser-80 each coordinate Ca(2+). N-linked (GlcNAc...) asparagine glycosylation is present at Asn-155. Pro-163 contacts substrate. A glycan (N-linked (GlcNAc...) asparagine) is linked at Asn-182. A heme b-binding site is contributed by His-193. Thr-194 lines the Ca(2+) pocket. N-linked (GlcNAc...) asparagine glycans are attached at residues Asn-209 and Asn-239. A Ca(2+)-binding site is contributed by Asp-245. The N-linked (GlcNAc...) asparagine glycan is linked to Asn-247. Positions 248 and 253 each coordinate Ca(2+). An N-linked (GlcNAc...) asparagine glycan is attached at Asn-281.

It belongs to the peroxidase family. Classical plant (class III) peroxidase subfamily. It depends on Ca(2+) as a cofactor. Heme b is required as a cofactor.

The protein resides in the secreted. The catalysed reaction is 2 a phenolic donor + H2O2 = 2 a phenolic radical donor + 2 H2O. Removal of H(2)O(2), oxidation of toxic reductants, biosynthesis and degradation of lignin, suberization, auxin catabolism, response to environmental stresses such as wounding, pathogen attack and oxidative stress. These functions might be dependent on each isozyme/isoform in each plant tissue. The chain is Peroxidase N (HRPN) from Armoracia rusticana (Horseradish).